The primary structure comprises 481 residues: MLSILPLAYSNFSRILQYFEQLPVVDKMTEEILKQGVGIVETSLTFEPPFCESFERISIDNFPIFALGKEISKEDGIEAMKKYVTSRFWFTYRRDFSPIGGTGPSTDQGWGCMLRCAQMLLGEVLLRRHIGRHFEWDIEKTSEIYEKILQMFFDEKDALYSIHQIAQMGVTEGKEVSKWFGPNTAAQVMKKLTIFDDWSNIAVHVALDNILVKEDAITMATSYPSEDAVKLIMENGLVDKNRLSLSPGNIIPEWRPLLLMIPLRLGLTTINPCYLSAIQEFFKIPQCVGIIGGRPNHALYFVGMSGSKLFYLDPHYCRPKTESTAKMYAEKDSTATTDDVGFSHLEELVPLPSQTADVYTKMDDSTYHCQMMLWIEYENVDPSLALAMFCETRDEFENLCETLQKTTLPASQPPMFEFLQRRPKYLPKFEPYTGVSMKIEMKEFDDIGAANVKIDDDFEVLDVHTEEEDADEDNDDDVANA.

Residue C112 is the Nucleophile of the active site. Catalysis depends on residues D313 and H315. The disordered stretch occupies residues 462 to 481; it reads DVHTEEEDADEDNDDDVANA.

It belongs to the peptidase C54 family.

The protein resides in the cytoplasm. The enzyme catalyses [protein]-C-terminal L-amino acid-glycyl-phosphatidylethanolamide + H2O = [protein]-C-terminal L-amino acid-glycine + a 1,2-diacyl-sn-glycero-3-phosphoethanolamine. Cysteine protease required for autophagy. Cleaves the C-terminal amino acid of ATG8 family proteins lgg-1, to reveal a C-terminal glycine. Exposure of the glycine at the C-terminus is essential for ATG8 proteins conjugation to phosphatidylethanolamine (PE) and insertion to membranes, which is necessary for autophagy. Its cleavage activity is functionally redundant to atg-4.2, but it cleaves lgg-1 precursors more efficiently than atg-4.2. Acts redundantly with atg-4.2 to promote the lgg-1 delipidation to release the protein from membranes, which facilitates multiple events during macroautophagy. Unlike atg-4.2 does not seem to be required for autophagosome maturation. This is Cysteine protease atg-4.1 from Caenorhabditis elegans.